Reading from the N-terminus, the 917-residue chain is Hexokinase-2 (917 aa).

An N-acetylmethionine modification is found at Met1. The tract at residues 1 to 16 (MIASHLLAYFFTELNH) is mitochondrial-binding peptide (MBP). Hexokinase domains are found at residues 16–458 (HDQV…MVTA) and 464–906 (ADQH…LITA). ATP is bound by residues Arg30 and 84–89 (DLGGTN). Residues 73–207 (DGTEHGEFLA…DFDIDIVAVV (135 aa)) form a hexokinase small subdomain 1 region. 84-88 (DLGGT) serves as a coordination point for D-glucose 6-phosphate. D-glucose is bound by residues 155-156 (SF), 172-173 (TK), and 208-209 (ND). The tract at residues 208-447 (NDTVGTMMTC…CDVRFLRSED (240 aa)) is hexokinase large subdomain 1. D-glucose 6-phosphate contacts are provided by Asp209 and Thr232. D-glucose contacts are provided by residues Asn235, Glu260, and 291–294 (QLFE). 413-415 (DGS) contacts D-glucose 6-phosphate. 425–426 (KR) lines the ATP pocket. D-glucose 6-phosphate contacts are provided by residues Ser449 and 532–536 (DLGGT). The segment at 521–655 (DGTEKGDFLA…EFDLDVVAVV (135 aa)) is hexokinase small subdomain 2. 532-537 (DLGGTN) provides a ligand contact to ATP. D-glucose contacts are provided by residues 603-604 (SF), 620-621 (TK), and 656-657 (ND). The hexokinase large subdomain 2 stretch occupies residues 656–895 (NDTVGTMMTC…CDVSFLQSED (240 aa)). D-glucose 6-phosphate-binding residues include Asp657 and Thr680. Thr680 serves as a coordination point for ATP. D-glucose-binding positions include 682–683 (SN), Glu708, and 739–742 (QRFE). ATP is bound by residues 747–748 (GM), 784–788 (TKFLS), and 863–867 (TLYKL). Residues 861–863 (DGT) and Ser897 contribute to the D-glucose 6-phosphate site.

It belongs to the hexokinase family. In terms of assembly, monomer. Interacts with TIGAR; the interaction increases hexokinase activity in a hypoxia- and HIF1A-dependent manner. As to expression, predominant hexokinase isozyme expressed in insulin-responsive tissues such as skeletal muscle.

It localises to the mitochondrion outer membrane. The protein localises to the cytoplasm. It is found in the cytosol. It catalyses the reaction a D-hexose + ATP = a D-hexose 6-phosphate + ADP + H(+). The catalysed reaction is D-fructose + ATP = D-fructose 6-phosphate + ADP + H(+). It carries out the reaction D-glucose + ATP = D-glucose 6-phosphate + ADP + H(+). The protein operates within carbohydrate metabolism; hexose metabolism. It participates in carbohydrate degradation; glycolysis; D-glyceraldehyde 3-phosphate and glycerone phosphate from D-glucose: step 1/4. With respect to regulation, hexokinase activity is specifically inhibited by 2,6-disubstituted glucosamines. Its function is as follows. Catalyzes the phosphorylation of hexose, such as D-glucose and D-fructose, to hexose 6-phosphate (D-glucose 6-phosphate and D-fructose 6-phosphate, respectively). Mediates the initial step of glycolysis by catalyzing phosphorylation of D-glucose to D-glucose 6-phosphate. Plays a key role in maintaining the integrity of the outer mitochondrial membrane by preventing the release of apoptogenic molecules from the intermembrane space and subsequent apoptosis. The protein is Hexokinase-2 of Homo sapiens (Human).